The primary structure comprises 367 residues: Polyenoic acids biosynthesis gene cluster protein Ba17b (367 aa).

3 helical membrane-spanning segments follow: residues 16–36, 50–70, and 90–110; these read LEVF…LRFY, WLII…IGAV, and LVAF…TEGL. A glycan (N-linked (GlcNAc...) asparagine) is linked at Asn133. The next 3 helical transmembrane spans lie at 137–157, 183–203, and 211–231; these read LVLV…CTPF, FPNI…VWGL, and LVLV…GGDS. Asn245 carries N-linked (GlcNAc...) asparagine glycosylation. Residues 259-279 form a helical membrane-spanning segment; sequence LIIWTVCEPGVYLIAACLLVY.

Belongs to the SAT4 family.

The protein resides in the membrane. The protein operates within secondary metabolite biosynthesis. Functionally, part of the gene cluster that mediates the biosynthesis of (2Z,4E,6E,10E)-9-hydroxydodeca-2,4,6,10-tetraenoic acid (BAA), (2E,4E,6E,10E)-9-hydroxydodeca-2,4,6,10-tetraenoic acid (BAB), and (2Z,4E,6E)-octa-2,4,6-trienedioic acid (PBA). The highly reducing polyketide synthase Ba17a is sufficent to produce PBA and BAA. The still to be characterized protein Ba17b leads to an increased production of BAA as well as to the production of the new compound BAB. BAA does not possess insecticidal activity against G.mellonella larvae, however, both BAA and BAB increase the growth of Candida albicans and BAA can mitigate the fungicidal effects of fluconazole over C.albicans, suggesting that generalist pathogens such as M.anisopliae, can potentially manipulate the yeast microbiota found in arthropods (and anywhere else) by the activity of compounds as BAA and BAB. The protein is Polyenoic acids biosynthesis gene cluster protein Ba17b of Metarhizium anisopliae (Entomophthora anisopliae).